Reading from the N-terminus, the 1134-residue chain is DENN domain-containing protein 2B (1134 aa).

Polar residues predominate over residues 1 to 13; that stretch reads MTMTANKNSSITH. The segment at 1–90 is disordered; it reads MTMTANKNSS…DPSPETSPPI (90 aa). A phosphoserine mark is found at serine 30 and serine 32. Residues 32–43 show a composition bias toward pro residues; that stretch reads SPPPVLYPPRSP. Residue threonine 228 is modified to Phosphothreonine. At serine 230 the chain carries Phosphoserine. Disordered stretches follow at residues 233–273 and 289–571; these read SYPE…GIRK and LKEQ…KRHS. Positions 249-259 are enriched in basic and acidic residues; the sequence is SLYRLEKRPGR. The span at 315–348 shows a compositional bias: low complexity; it reads GTLGTLEEPTGTASVSPSSRAGGVAGVAGEAGPP. Threonine 361 is subject to Phosphothreonine. Serine 365 carries the post-translational modification Phosphoserine. Residues 370–385 are compositionally biased toward pro residues; sequence LLPPKSSPDPAVNPVP. Over residues 389-399 the composition is skewed to basic and acidic residues; sequence RTFEYEADKNP. Residues 406 to 428 are compositionally biased toward pro residues; it reads GLPPSPTPAAPPPLPSTPAPPVT. The segment covering 429 to 443 has biased composition (basic residues); sequence RRPKKDMRGHRKSQN. Positions 453 to 478 are enriched in polar residues; that stretch reads SSLQSLYPSSPTENGTESQPKFGSKS. Position 479 is a phosphothreonine (threonine 479). 2 stretches are compositionally biased toward polar residues: residues 511 to 521 and 542 to 555; these read KSQQLSENSLD and SLKS…SGNW. Serine 542 bears the Phosphoserine mark. Residues 559–570 are compositionally biased toward basic residues; it reads KSHRLPRLPKRH. Serine 571 and serine 619 each carry phosphoserine. Residues 633 to 658 form a disordered region; that stretch reads LSMSSLETASLRDENSESESDSDDRF. Residues 695–843 enclose the uDENN domain; sequence EYFVVVSLKK…PFPAPGKTIK (149 aa). The region spanning 865–998 is the cDENN domain; the sequence is RLEHVDFECL…LQAALEQALE (134 aa). The dDENN domain occupies 1000–1093; the sequence is KSELISQDSD…QDRELRKCRA (94 aa).

As to quaternary structure, interacts with ITSN1 and GRB2. Isoform 1 interacts with the SH3 domain of ABL1. Phosphorylated. Phosphorylation decreases ITSN1 binding.

The protein resides in the cytoplasm. Its subcellular location is the cell cortex. The protein localises to the cell membrane. It is found in the recycling endosome. In terms of biological role, may be involved in cytoskeletal organization and tumorogenicity. Seems to be involved in a signaling transduction pathway leading to activation of MAPK1/ERK2. Plays a role in EGFR trafficking from recycling endosomes back to the cell membrane. Its function is as follows. Guanine nucleotide exchange factor (GEF) which may activate RAB9A and RAB9B. Promotes the exchange of GDP to GTP, converting inactive GDP-bound Rab proteins into their active GTP-bound form. May block ERK2 activation stimulated by ABL1. May alter cell morphology and cell growth. The sequence is that of DENN domain-containing protein 2B (Dennd2b) from Mus musculus (Mouse).